Reading from the N-terminus, the 61-residue chain is MSDKKVTITQVRSMIGCTKKQKATIKALGLRRPNNKVEKPDNPCTRGQIRVVQHLVKVEEQ.

The protein belongs to the universal ribosomal protein uL30 family. In terms of assembly, part of the 50S ribosomal subunit.

This chain is Large ribosomal subunit protein uL30, found in Chlorobium phaeobacteroides (strain BS1).